Here is a 600-residue protein sequence, read N- to C-terminus: Proline dehydrogenase 1, mitochondrial (600 aa).

A disordered region spans residues 155–177; that stretch reads AEHKEMESCTSAAERDGSGTNKR. N6-acetyllysine occurs at positions 368 and 486.

The protein belongs to the proline oxidase family. It depends on FAD as a cofactor. Expressed in lung, skeletal muscle and brain, to a lesser extent in heart and kidney, and weakly in liver, placenta and pancreas.

Its subcellular location is the mitochondrion matrix. The enzyme catalyses L-proline + a quinone = (S)-1-pyrroline-5-carboxylate + a quinol + H(+). It functions in the pathway amino-acid degradation; L-proline degradation into L-glutamate; L-glutamate from L-proline: step 1/2. Functionally, converts proline to delta-1-pyrroline-5-carboxylate. The protein is Proline dehydrogenase 1, mitochondrial of Homo sapiens (Human).